We begin with the raw amino-acid sequence, 207 residues long: Ras-related protein Rab-7a (207 aa).

N-acetylthreonine is present on Thr-2. Residues Ser-17, Gly-18, Val-19, Gly-20, Lys-21, Thr-22, Ser-23, Ser-34, Asn-35, Tyr-37, and Thr-40 each coordinate GTP. Thr-22 provides a ligand contact to Mg(2+). The Switch 1 signature appears at 28 to 41 (YVNKKFSNQYKATI). 2 residues coordinate Mg(2+): Thr-40 and Asp-63. Position 66 (Gly-66) interacts with GTP. The Switch 2 signature appears at 67 to 82 (QERFQSLGVAFYRGAD). The residue at position 72 (Ser-72) is a Phosphoserine. GTP is bound by residues Asn-125, Lys-126, Asp-128, Ala-156, and Lys-157. Glycyl lysine isopeptide (Lys-Gly) (interchain with G-Cter in ubiquitin) cross-links involve residues Lys-191 and Lys-194. Residues Cys-205 and Cys-207 are each lipidated (S-geranylgeranyl cysteine). A Cysteine methyl ester modification is found at Cys-207.

It belongs to the small GTPase superfamily. Rab family. As to quaternary structure, interacts with NTRK1/TRKA. Interacts with RILP. Interacts with PSMA7. Interacts with RNF115. Interacts with FYCO1. Interacts with the PIK3C3/VPS34-PIK3R4 complex. The GTP-bound form interacts with OSBPL1A. The GTP-bound form interacts with RAC1. Interacts with CLN3. Interacts with CHM, the substrate-binding subunit of the Rab geranylgeranyltransferase complex. Interacts with C9orf72. Does not interact with HPS4 and the BLOC-3 complex (heterodimer of HPS1 and HPS4). Interacts with CLN5. Interacts with PLEKHM1 (via N- and C-terminus). Interacts with PRPH; the interaction is direct. Interacts with VPS13A. The GDP-bound form interacts with RIMOC1. Interacts with the MON1A-CCZ1B complex and this interaction is enhanced in the presence of RIMOC1. Interacts with VPS39 and VPS41. Forms a ternary complex with LAMP2 and RUFY4; the interaction with LAMP2 is mediated by RUFY4 (via RUN and coiled coil domains). The cofactor is Mg(2+). Deubiquitination at Lys-191 and Lys-194 by USP32. Post-translationally, phosphorylated at Ser-72 by LRRK1; phosphorylation is dependent on protein kinase C (PKC) activation of LRRK1. In terms of processing, prenylated. Prenylation is required for association with cellular membranes.

It is found in the cytoplasmic vesicle. The protein localises to the phagosome membrane. It localises to the late endosome membrane. The protein resides in the lysosome membrane. Its subcellular location is the melanosome membrane. It is found in the autophagosome membrane. The protein localises to the lipid droplet. It localises to the endosome membrane. The protein resides in the mitochondrion membrane. It catalyses the reaction GTP + H2O = GDP + phosphate + H(+). Its activity is regulated as follows. Regulated by guanine nucleotide exchange factors (GEFs) which promote the exchange of bound GDP for free GTP. Regulated by GTPase activating proteins (GAPs) which increase the GTP hydrolysis activity. Inhibited by GDP dissociation inhibitors (GDIs). Functionally, the small GTPases Rab are key regulators of intracellular membrane trafficking, from the formation of transport vesicles to their fusion with membranes. Rabs cycle between an inactive GDP-bound form and an active GTP-bound form that is able to recruit to membranes different sets of downstream effectors directly responsible for vesicle formation, movement, tethering and fusion. In its active state, RAB7A binds to a variety of effector proteins playing a key role in the regulation of endo-lysosomal trafficking. Governs early-to-late endosomal maturation, microtubule minus-end as well as plus-end directed endosomal migration and positioning, and endosome-lysosome transport through different protein-protein interaction cascades. Also plays a central role in growth-factor-mediated cell signaling, nutrient-transporter-mediated nutrient uptake, neurotrophin transport in the axons of neurons and lipid metabolism. Also involved in regulation of some specialized endosomal membrane trafficking, such as maturation of melanosomes, pathogen-induced phagosomes (or vacuoles) and autophagosomes. Plays a role in the maturation and acidification of phagosomes that engulf pathogens, such as S.aureus and Mycobacteria. Plays a role in the fusion of phagosomes with lysosomes. In concert with RAC1, plays a role in regulating the formation of RBs (ruffled borders) in osteoclasts. Controls the endosomal trafficking and neurite outgrowth signaling of NTRK1/TRKA. Regulates the endocytic trafficking of the EGF-EGFR complex by regulating its lysosomal degradation. Involved in the ADRB2-stimulated lipolysis through lipophagy, a cytosolic lipase-independent autophagic pathway. Required for the exosomal release of SDCBP, CD63 and syndecan. Required for vesicular trafficking and cell surface expression of ACE2. May play a role in PRPH neuronal intermediate filament assembly. The polypeptide is Ras-related protein Rab-7a (RAB7A) (Pongo abelii (Sumatran orangutan)).